We begin with the raw amino-acid sequence, 299 residues long: Formin-like protein 12 (299 aa).

Positions 1–295 constitute an FH2 domain; that stretch reads MASNCEKMLS…LEKRKMNIKQ (295 aa).

This sequence belongs to the formin-like family. Class-II subfamily.

This Arabidopsis thaliana (Mouse-ear cress) protein is Formin-like protein 12 (FH12).